A 1037-amino-acid chain; its full sequence is Huntingtin-interacting protein 1 (1037 aa).

Residues 32–160 (ERESFERTQT…EYHTKNPRFP (129 aa)) enclose the ENTH domain. A Phosphoserine modification is found at serine 338. The stretch at 368–644 (VNKDEKDHLI…IQDALNQLEE (277 aa)) forms a coiled coil. The tract at residues 410-491 (SELEADLAEQ…HADLLRKNAE (82 aa)) is pDED. An I/LWEQ domain is found at 771 to 1012 (GLDIKQEELG…ELRKKHYELA (242 aa)). Residues 867–924 (RWTEGLISASKAVGWGATVMVDAADLVVQGRGKFEELMVCSHEIAASTAQLVAASKVK) form an important for actin binding region. Residues 1017-1037 (GWEEGTEASPPTLQEVVTEKE) form a disordered region.

This sequence belongs to the SLA2 family. In terms of assembly, homodimer. Binds actin. Binds HTT (via N-terminus). This interaction is restricted to the brain. Binds to IFT57. In normal conditions, it poorly interacts with IFT57, HIP1 being strongly associated with HTT. However, in mutant HTT proteins with a long poly-Gln region, interaction between HTT and HIP1 is inhibited, promoting the interaction between HIP1 and IFT57. Interacts with CLTB (via N-terminus). Interacts (via coiled coil domain) with AR. Interacts with AP2A1, AP2A2, CLTC and HIP1R. Interacts with GRIA1, GRIN2A and GRIN2B. As to expression, ubiquitously expressed with the highest level in brain. Expression is up-regulated in prostate and colon cancer.

The protein resides in the cytoplasm. Its subcellular location is the nucleus. It localises to the endomembrane system. It is found in the cytoplasmic vesicle. The protein localises to the clathrin-coated vesicle membrane. Plays a role in clathrin-mediated endocytosis and trafficking. Involved in regulating AMPA receptor trafficking in the central nervous system in an NMDA-dependent manner. Regulates presynaptic nerve terminal activity. Enhances androgen receptor (AR)-mediated transcription. May act as a proapoptotic protein that induces cell death by acting through the intrinsic apoptosis pathway. Binds 3-phosphoinositides (via ENTH domain). May act through the ENTH domain to promote cell survival by stabilizing receptor tyrosine kinases following ligand-induced endocytosis. May play a functional role in the cell filament networks. May be required for differentiation, proliferation, and/or survival of somatic and germline progenitors. This chain is Huntingtin-interacting protein 1 (HIP1), found in Homo sapiens (Human).